The chain runs to 515 residues: MLLSQNAFIFRSLNLVLMVYISLVFGISYDSPDYTDESCTFKISLRNFRSILSWELKNHSIVPTHYTLLYTIMSKPEDLKVVKNCANTTRSFCDLTDEWRSTHEAYVTVLEGFSGNTTLFSCSHNFWLAIDMSFEPPEFEIVGFTNHINVMVKFPSIVEEELQFDLSLVIEEQSEGIVKKHKPEIKGNMSGNFTYIIDKLIPNTNYCVSVYLEHSDEQAVIKSPLKCTLLPPGQESESAESAKIGGIITVFLIALVLTSTIVTLKWIGYICLRNSLPKVLNFHNFLAWPFPNLPPLEAMDMVEVIYINRKKKVWDYNYDDESDSDTEAAPRTSGGGYTMHGLTVRPLGQASATSTESQLIDPESEEEPDLPEVDVELPTMPKDSPQQLELLSGPCERRKSPLQDPFPEEDYSSTEGSGGRITFNVDLNSVFLRVLDDEDSDDLEAPLMLSSHLEEMVDPEDPDNVQSNHLLASGEGTQPTFPSPSSEGLWSEDAPSDQSDTSESDVDLGDGYIMR.

The first 26 residues, 1 to 26 (MLLSQNAFIFRSLNLVLMVYISLVFG), serve as a signal peptide directing secretion. Topologically, residues 27–243 (ISYDSPDYTD…QESESAESAK (217 aa)) are extracellular. 2 disulfide bridges follow: Cys-39/Cys-122 and Cys-85/Cys-93. N-linked (GlcNAc...) asparagine glycosylation is found at Asn-58, Asn-87, Asn-116, Asn-188, and Asn-192. Cysteines 207 and 227 form a disulfide. A helical membrane pass occupies residues 244–264 (IGGIITVFLIALVLTSTIVTL). Topologically, residues 265 to 515 (KWIGYICLRN…VDLGDGYIMR (251 aa)) are cytoplasmic. Disordered regions lie at residues 318–418 (YDDE…EGSG) and 455–515 (EMVD…YIMR). Position 337 is a phosphotyrosine (Tyr-337). Positions 362–375 (PESEEEPDLPEVDV) are enriched in acidic residues. Position 400 is a phosphoserine (Ser-400). The tract at residues 418–444 (GGRITFNVDLNSVFLRVLDDEDSDDLE) is mediates interaction with STAT2 (and required for the recruitment of USP18). The span at 464–488 (NVQSNHLLASGEGTQPTFPSPSSEG) shows a compositional bias: polar residues. At Ser-467 the chain carries Phosphoserine. The residue at position 512 (Tyr-512) is a Phosphotyrosine.

Belongs to the type II cytokine receptor family. Heterodimer with IFNAR1; forming the receptor for type I interferon. Interacts with JAK1. Interacts with the transcriptional factors STAT1 and STAT2. Interacts with USP18; indirectly via STAT2, it negatively regulates the assembly of the ternary interferon-IFNAR1-IFNAR2 complex and therefore type I interferon signaling. Post-translationally, phosphorylated on tyrosine residues upon interferon binding. Phosphorylation at Tyr-337 or Tyr-512 are sufficient to mediate interferon dependent activation of STAT1, STAT2 and STAT3 leading to antiproliferative effects on many different cell types. Glycosylated. As to expression, isoform 3 is detected in the urine (at protein level). Expressed in blood cells. Expressed in lymphoblastoid and fibrosarcoma cell lines.

Its subcellular location is the cell membrane. The protein resides in the secreted. Together with IFNAR1, forms the heterodimeric receptor for type I interferons (including interferons alpha, beta, epsilon, omega and kappa). Type I interferon binding activates the JAK-STAT signaling cascade, resulting in transcriptional activation or repression of interferon-regulated genes that encode the effectors of the interferon response. Mechanistically, type I interferon-binding brings the IFNAR1 and IFNAR2 subunits into close proximity with one another, driving their associated Janus kinases (JAKs) (TYK2 bound to IFNAR1 and JAK1 bound to IFNAR2) to cross-phosphorylate one another. The activated kinases phosphorylate specific tyrosine residues on the intracellular domains of IFNAR1 and IFNAR2, forming docking sites for the STAT transcription factors (STAT1, STAT2 and STAT). STAT proteins are then phosphorylated by the JAKs, promoting their translocation into the nucleus to regulate expression of interferon-regulated genes. Functionally, potent inhibitor of type I IFN receptor activity. The sequence is that of Interferon alpha/beta receptor 2 (IFNAR2) from Homo sapiens (Human).